The following is a 231-amino-acid chain: Orotidine 5'-phosphate decarboxylase (231 aa).

Substrate contacts are provided by residues aspartate 11, lysine 33, 60 to 69 (DLKFHDIPNT), threonine 120, arginine 181, glutamine 190, glycine 210, and arginine 211. Catalysis depends on lysine 62, which acts as the Proton donor.

It belongs to the OMP decarboxylase family. Type 1 subfamily. As to quaternary structure, homodimer.

The enzyme catalyses orotidine 5'-phosphate + H(+) = UMP + CO2. The protein operates within pyrimidine metabolism; UMP biosynthesis via de novo pathway; UMP from orotate: step 2/2. Catalyzes the decarboxylation of orotidine 5'-monophosphate (OMP) to uridine 5'-monophosphate (UMP). The chain is Orotidine 5'-phosphate decarboxylase from Shewanella oneidensis (strain ATCC 700550 / JCM 31522 / CIP 106686 / LMG 19005 / NCIMB 14063 / MR-1).